Here is a 53-residue protein sequence, read N- to C-terminus: Large ribosomal subunit protein bL33A (53 aa).

Belongs to the bacterial ribosomal protein bL33 family.

This Mycoplasma pneumoniae (strain ATCC 29342 / M129 / Subtype 1) (Mycoplasmoides pneumoniae) protein is Large ribosomal subunit protein bL33A (rpmG1).